Consider the following 240-residue polypeptide: uncharacterized protein (240 aa).

The disordered stretch occupies residues 93-160 (QEASGCTVGE…AGGGAAASGQ (68 aa)). Composition is skewed to low complexity over residues 110–119 (AQPSQPAQGG) and 129–150 (GGAE…PAEN).

This is an uncharacterized protein from Streptomyces viridochromogenes.